A 276-amino-acid polypeptide reads, in one-letter code: S-adenosylmethionine decarboxylase proenzyme (276 aa).

Ser124 functions as the Schiff-base intermediate with substrate; via pyruvic acid in the catalytic mechanism. Ser124 carries the pyruvic acid (Ser); by autocatalysis modification. Residue His129 is the Proton acceptor; for processing activity of the active site. Catalysis depends on Cys152, which acts as the Proton donor; for catalytic activity.

It belongs to the prokaryotic AdoMetDC family. Type 2 subfamily. As to quaternary structure, heterooctamer of four alpha and four beta chains arranged as a tetramer of alpha/beta heterodimers. The cofactor is pyruvate. Post-translationally, is synthesized initially as an inactive proenzyme. Formation of the active enzyme involves a self-maturation process in which the active site pyruvoyl group is generated from an internal serine residue via an autocatalytic post-translational modification. Two non-identical subunits are generated from the proenzyme in this reaction, and the pyruvate is formed at the N-terminus of the alpha chain, which is derived from the carboxyl end of the proenzyme. The post-translation cleavage follows an unusual pathway, termed non-hydrolytic serinolysis, in which the side chain hydroxyl group of the serine supplies its oxygen atom to form the C-terminus of the beta chain, while the remainder of the serine residue undergoes an oxidative deamination to produce ammonia and the pyruvoyl group blocking the N-terminus of the alpha chain.

It carries out the reaction S-adenosyl-L-methionine + H(+) = S-adenosyl 3-(methylsulfanyl)propylamine + CO2. The protein operates within amine and polyamine biosynthesis; S-adenosylmethioninamine biosynthesis; S-adenosylmethioninamine from S-adenosyl-L-methionine: step 1/1. Its function is as follows. Catalyzes the decarboxylation of S-adenosylmethionine to S-adenosylmethioninamine (dcAdoMet), the propylamine donor required for the synthesis of the polyamines spermine and spermidine from the diamine putrescine. This Desulfitobacterium hafniense (strain Y51) protein is S-adenosylmethionine decarboxylase proenzyme.